The chain runs to 293 residues: MAAKIVSVLFLISLLIFASFESSHGSQIVIYWGQNGDEGSLADTCNSGNYGTVILAFVATFGNGQTPALNLAGHCDPATNCNSLSSDIKTCQQAGIKVLLSIGGGAGGYSLSSTDDANTFADYLWNTYLGGQSSTRPLGDAVLDGIDFDIESGDGRFWDDLARALAGHNNGQKTVYLSAAPQCPLPDASLSTAIATGLFDYVWVQFYNNPPCQYDTSADNLLSSWNQWTTVQANQIFLGLPASTDAAGSGFIPADALTSQVLPTIKGSAKYGGVMLWSKAYDSGYSSAIKSSV.

Positions 1 to 25 (MAAKIVSVLFLISLLIFASFESSHG) are cleaved as a signal peptide. One can recognise a GH18 domain in the interval 26-293 (SQIVIYWGQN…GYSSAIKSSV (268 aa)). 2 cysteine pairs are disulfide-bonded: cysteine 45–cysteine 91 and cysteine 75–cysteine 81. Glutamate 151 serves as the catalytic Proton donor. Cysteines 183 and 212 form a disulfide.

It belongs to the glycosyl hydrolase 18 family. Chitinase class II subfamily. As to expression, accumulates in leaves during infection.

The protein resides in the secreted. Its subcellular location is the extracellular space. It catalyses the reaction Random endo-hydrolysis of N-acetyl-beta-D-glucosaminide (1-&gt;4)-beta-linkages in chitin and chitodextrins.. In terms of biological role, this protein functions as a defense against chitin containing fungal pathogens. This endochitinase also exhibits exochitinase activity, i.e. it is capable of hydrolyzing chito-oligosaccharides, including chitobiose. This chain is Acidic endochitinase SE2 (SE2), found in Beta vulgaris (Sugar beet).